A 207-amino-acid polypeptide reads, in one-letter code: Probable HTH-type transcriptional regulator YttP (207 aa).

One can recognise an HTH tetR-type domain in the interval 3-63; that stretch reads VSTKDKIIES…HLVSEFYEGY (61 aa). Residues 26 to 45 constitute a DNA-binding region (H-T-H motif); it reads SVREIAKSADVNVAHISYYF.

In Bacillus subtilis (strain 168), this protein is Probable HTH-type transcriptional regulator YttP (yttP).